Reading from the N-terminus, the 57-residue chain is Orphan toxin OrtT (57 aa).

2 helical membrane passes run 6-26 (HMLV…WFLS) and 34-54 (FLSA…ALLF).

This sequence belongs to the GhoT/OrtT toxin family.

The protein localises to the cell inner membrane. Its function is as follows. Acts as an orphan toxin which is important for maintaining cell fitness during stress related to the stringent response. Increases the formation of persister cells. Has no known antitoxin. This is Orphan toxin OrtT from Escherichia coli O6:H1 (strain CFT073 / ATCC 700928 / UPEC).